Reading from the N-terminus, the 105-residue chain is Pyrimidine/purine nucleoside phosphorylase (105 aa).

The protein belongs to the nucleoside phosphorylase PpnP family.

The enzyme catalyses a purine D-ribonucleoside + phosphate = a purine nucleobase + alpha-D-ribose 1-phosphate. The catalysed reaction is adenosine + phosphate = alpha-D-ribose 1-phosphate + adenine. It carries out the reaction cytidine + phosphate = cytosine + alpha-D-ribose 1-phosphate. It catalyses the reaction guanosine + phosphate = alpha-D-ribose 1-phosphate + guanine. The enzyme catalyses inosine + phosphate = alpha-D-ribose 1-phosphate + hypoxanthine. The catalysed reaction is thymidine + phosphate = 2-deoxy-alpha-D-ribose 1-phosphate + thymine. It carries out the reaction uridine + phosphate = alpha-D-ribose 1-phosphate + uracil. It catalyses the reaction xanthosine + phosphate = alpha-D-ribose 1-phosphate + xanthine. In terms of biological role, catalyzes the phosphorolysis of diverse nucleosides, yielding D-ribose 1-phosphate and the respective free bases. Can use uridine, adenosine, guanosine, cytidine, thymidine, inosine and xanthosine as substrates. Also catalyzes the reverse reactions. This chain is Pyrimidine/purine nucleoside phosphorylase, found in Delftia acidovorans (strain DSM 14801 / SPH-1).